A 94-amino-acid polypeptide reads, in one-letter code: Large ribosomal subunit protein uL23 (94 aa).

The protein belongs to the universal ribosomal protein uL23 family. As to quaternary structure, part of the 50S ribosomal subunit. Contacts protein L29, and trigger factor when it is bound to the ribosome.

Functionally, one of the early assembly proteins it binds 23S rRNA. One of the proteins that surrounds the polypeptide exit tunnel on the outside of the ribosome. Forms the main docking site for trigger factor binding to the ribosome. The chain is Large ribosomal subunit protein uL23 from Dehalococcoides mccartyi (strain ATCC BAA-2100 / JCM 16839 / KCTC 5957 / BAV1).